A 477-amino-acid chain; its full sequence is Lactate utilization protein B (477 aa).

4Fe-4S ferredoxin-type domains are found at residues 304–334 (GTEF…GHSY) and 353–382 (YDDY…LHEL). Residues C313, C316, C319, C323, C366, C369, and C373 each coordinate [4Fe-4S] cluster. The tract at residues 433–477 (KEDGKITKGPGPLKQWTQIRDFPAPNKSRFRDWFEDRRKEKGEDK) is disordered. The segment covering 461–477 (RFRDWFEDRRKEKGEDK) has biased composition (basic and acidic residues).

The protein belongs to the LutB/YkgF family.

Is involved in L-lactate degradation and allows cells to grow with lactate as the sole carbon source. Has probably a role as an electron transporter during oxidation of L-lactate. The sequence is that of Lactate utilization protein B from Bacillus licheniformis (strain ATCC 14580 / DSM 13 / JCM 2505 / CCUG 7422 / NBRC 12200 / NCIMB 9375 / NCTC 10341 / NRRL NRS-1264 / Gibson 46).